Consider the following 221-residue polypeptide: C-8 sterol isomerase (221 aa).

A helical membrane pass occupies residues 5–25 (ISGFLRFVAVLLAVVSPLVYL).

It belongs to the ERG2 family.

The protein localises to the endoplasmic reticulum membrane. The protein operates within steroid metabolism; ergosterol biosynthesis; ergosterol from zymosterol: step 2/5. Catalyzes the reaction which results in unsaturation at C-7 in the B ring of sterols. This chain is C-8 sterol isomerase (ERG2), found in Pyricularia oryzae (strain 70-15 / ATCC MYA-4617 / FGSC 8958) (Rice blast fungus).